Consider the following 320-residue polypeptide: Arylacetonitrilase (320 aa).

Residues 5 to 286 (IKASVVQAST…EGVISAELDL (282 aa)) enclose the CN hydrolase domain. Catalysis depends on Glu46, which acts as the Proton acceptor. Lys133 is an active-site residue. Cys178 acts as the Nucleophile in catalysis.

This sequence belongs to the carbon-nitrogen hydrolase superfamily. Nitrilase family.

The enzyme catalyses a nitrile + 2 H2O = a carboxylate + NH4(+). Nitrilase that hydrolyzes preferentially fumaronitrile, while 3-phenylpropionitrile, beta-cyano-L-alanine and 4-cyanopyridine are transformed at much lower rates. This is Arylacetonitrilase (nit) from Trametes versicolor (strain FP-101664) (White-rot fungus).